Consider the following 380-residue polypeptide: DNA-directed RNA polymerase subunit Rpo1C (380 aa).

The protein belongs to the RNA polymerase beta' chain family. As to quaternary structure, part of the RNA polymerase complex.

The protein resides in the cytoplasm. The enzyme catalyses RNA(n) + a ribonucleoside 5'-triphosphate = RNA(n+1) + diphosphate. Functionally, DNA-dependent RNA polymerase (RNAP) catalyzes the transcription of DNA into RNA using the four ribonucleoside triphosphates as substrates. Forms part of the jaw domain. This chain is DNA-directed RNA polymerase subunit Rpo1C, found in Archaeoglobus fulgidus (strain ATCC 49558 / DSM 4304 / JCM 9628 / NBRC 100126 / VC-16).